We begin with the raw amino-acid sequence, 534 residues long: C-22 sterol desaturase ERG5B (534 aa).

The chain crosses the membrane as a helical span at residues 43–61 (IAVTIFAVLIAYDQFMYIW). Residue C480 participates in heme binding.

Belongs to the cytochrome P450 family. The cofactor is heme.

The protein localises to the endoplasmic reticulum membrane. It carries out the reaction 5-dehydroepisterol + NADPH + O2 + H(+) = ergosta-5,7,22,24(28)-tetraen-3beta-ol + NADP(+) + 2 H2O. The protein operates within steroid metabolism; ergosterol biosynthesis. In terms of biological role, C-22 sterol desaturase; part of the third module of ergosterol biosynthesis pathway that includes the late steps of the pathway. ERG5A and ERG5B convert 5-dehydroepisterol into ergosta-5,7,22,24(28)-tetraen-3beta-ol by forming the C-22(23) double bond in the sterol side chain. The third module or late pathway involves the ergosterol synthesis itself through consecutive reactions that mainly occur in the endoplasmic reticulum (ER) membrane. Firstly, the squalene synthase ERG9 catalyzes the condensation of 2 farnesyl pyrophosphate moieties to form squalene, which is the precursor of all steroids. Squalene synthase is crucial for balancing the incorporation of farnesyl diphosphate (FPP) into sterol and nonsterol isoprene synthesis. Secondly, squalene is converted into lanosterol by the consecutive action of the squalene epoxidase ERG1 and the lanosterol synthase ERG7. Then, the delta(24)-sterol C-methyltransferase ERG6 methylates lanosterol at C-24 to produce eburicol. Eburicol is the substrate of the sterol 14-alpha demethylase encoded by CYP51A, CYP51B and CYP51C, to yield 4,4,24-trimethyl ergosta-8,14,24(28)-trienol. CYP51B encodes the enzyme primarily responsible for sterol 14-alpha-demethylation, and plays an essential role in ascospore formation. CYP51A encodes an additional sterol 14-alpha-demethylase, induced on ergosterol depletion and responsible for the intrinsic variation in azole sensitivity. The third CYP51 isoform, CYP51C, does not encode a sterol 14-alpha-demethylase, but is required for full virulence on host wheat ears. The C-14 reductase ERG24 then reduces the C14=C15 double bond which leads to 4,4-dimethylfecosterol. A sequence of further demethylations at C-4, involving the C-4 demethylation complex containing the C-4 methylsterol oxidases ERG25, the sterol-4-alpha-carboxylate 3-dehydrogenase ERG26 and the 3-keto-steroid reductase ERG27, leads to the production of fecosterol via 4-methylfecosterol. ERG28 has a role as a scaffold to help anchor ERG25, ERG26 and ERG27 to the endoplasmic reticulum. The C-8 sterol isomerase ERG2 then catalyzes the reaction which results in unsaturation at C-7 in the B ring of sterols and thus converts fecosterol to episterol. The sterol-C5-desaturases ERG3A and ERG3BB then catalyze the introduction of a C-5 double bond in the B ring to produce 5-dehydroepisterol. The C-22 sterol desaturases ERG5A and ERG5B further convert 5-dehydroepisterol into ergosta-5,7,22,24(28)-tetraen-3beta-ol by forming the C-22(23) double bond in the sterol side chain. Finally, ergosta-5,7,22,24(28)-tetraen-3beta-ol is substrate of the C-24(28) sterol reductase ERG4 to produce ergosterol. This chain is C-22 sterol desaturase ERG5B, found in Gibberella zeae (strain ATCC MYA-4620 / CBS 123657 / FGSC 9075 / NRRL 31084 / PH-1) (Wheat head blight fungus).